The chain runs to 393 residues: Elongation factor Tu (393 aa).

In terms of domain architecture, tr-type G spans 6 to 204 (KPHINVGTIG…ALEKIELPVR (199 aa)). The G1 stretch occupies residues 15 to 22 (GHVDHGKT). Position 15 to 22 (15 to 22 (GHVDHGKT)) interacts with GTP. Threonine 22 serves as a coordination point for Mg(2+). The interval 58–62 (GITIS) is G2. The segment at 79–82 (DCPG) is G3. Residues 79–83 (DCPGH) and 134–137 (NKCD) contribute to the GTP site. Residues 134-137 (NKCD) form a G4 region. Residues 172–174 (SAV) form a G5 region.

The protein belongs to the TRAFAC class translation factor GTPase superfamily. Classic translation factor GTPase family. EF-Tu/EF-1A subfamily. As to quaternary structure, monomer.

It is found in the cytoplasm. The enzyme catalyses GTP + H2O = GDP + phosphate + H(+). Functionally, GTP hydrolase that promotes the GTP-dependent binding of aminoacyl-tRNA to the A-site of ribosomes during protein biosynthesis. This is Elongation factor Tu from Anaplasma marginale (strain St. Maries).